The following is a 348-amino-acid chain: MLLDDRKLKILQAIIDDYIYSAEPVGSRTIAKKHELGLSSATIRNEMADLEEMGLLEQPYTSAGRIPSDRGYRLYVDQLMKIDELNECEIEKIRSDMNIRINELSQLIRSASAVMAKITKYTSMAVSPHMKKSVLKSVQVVPIESGKALVIIVTDANIVRNNLIRIPESVTPAFLIQISNMLNEQLKGFTLEMLKSDILNEKFEKLTALPFRLIKPILDGIEELIITIDNPEVYLEGATNILNFPEFKEVDKAKEFLNILDEKKLVSDLLTNSVNDNNEIIIHIGNENAMEGIKDCSLVTASYSVGNHVIGTIGIIGPTRMEYSRVVSSMNYIRNKINQEILKLLDNG.

The protein belongs to the HrcA family.

Its function is as follows. Negative regulator of class I heat shock genes (grpE-dnaK-dnaJ and groELS operons). Prevents heat-shock induction of these operons. The chain is Heat-inducible transcription repressor HrcA from Ruminiclostridium cellulolyticum (strain ATCC 35319 / DSM 5812 / JCM 6584 / H10) (Clostridium cellulolyticum).